A 558-amino-acid chain; its full sequence is Formate--tetrahydrofolate ligase (558 aa).

67–74 (TPAGEGKT) contacts ATP.

This sequence belongs to the formate--tetrahydrofolate ligase family.

The catalysed reaction is (6S)-5,6,7,8-tetrahydrofolate + formate + ATP = (6R)-10-formyltetrahydrofolate + ADP + phosphate. Its pathway is one-carbon metabolism; tetrahydrofolate interconversion. The polypeptide is Formate--tetrahydrofolate ligase (Roseobacter denitrificans (strain ATCC 33942 / OCh 114) (Erythrobacter sp. (strain OCh 114))).